The primary structure comprises 278 residues: Large ribosomal subunit protein uL2 (278 aa).

The segment at 214–278 (WLGKRPHNRG…IMRSRHQRKS (65 aa)) is disordered.

The protein belongs to the universal ribosomal protein uL2 family. As to quaternary structure, part of the 50S ribosomal subunit. Forms a bridge to the 30S subunit in the 70S ribosome.

One of the primary rRNA binding proteins. Required for association of the 30S and 50S subunits to form the 70S ribosome, for tRNA binding and peptide bond formation. It has been suggested to have peptidyltransferase activity; this is somewhat controversial. Makes several contacts with the 16S rRNA in the 70S ribosome. The chain is Large ribosomal subunit protein uL2 from Chelativorans sp. (strain BNC1).